We begin with the raw amino-acid sequence, 440 residues long: Discs overgrown protein kinase (440 aa).

The region spanning Tyr-9–Phe-277 is the Protein kinase domain. Residues Ile-15 to Ile-23 and Lys-38 contribute to the ATP site. Residue Asp-128 is the Proton acceptor of the active site. Positions Lys-221 to Lys-224 are nuclear localization signal; essential for interaction with Bdbt and important for nuclear localization. 2 positions are modified to phosphoserine: Ser-333 and Ser-334. Residues Ser-376–Lys-440 form a disordered region. The span at Gln-413–Lys-440 shows a compositional bias: gly residues.

This sequence belongs to the protein kinase superfamily. CK1 Ser/Thr protein kinase family. Casein kinase I subfamily. As to quaternary structure, forms a complex with per. Interacts with Dlish. Interacts (via nuclear localization signal) with Bdbt. Detected in the head (at protein level). Expressed in photoreceptor cells of the eyes as well as in the region situated between the optic lobe and the central brain.

The protein resides in the nucleus. It is found in the cytoplasm. Its subcellular location is the cytosol. It carries out the reaction L-seryl-[protein] + ATP = O-phospho-L-seryl-[protein] + ADP + H(+). The enzyme catalyses L-threonyl-[protein] + ATP = O-phospho-L-threonyl-[protein] + ADP + H(+). Serine/threonine-protein kinase which is involved in the circadian rhythm pathway, viability and planar cell polarity. In the circadian rhythm pathway, phosphorylates the clock gene period (per) and targets it for degradation in the absence of timeless (tim), thus contributing to production of the circadian oscillations of the clock genes. Together with CkIalpha, regulates processing of ci by phosphorylating it, which promotes its binding to slmb, the F-box recognition component of the SCF(slmb) E3 ubiquitin-protein ligase. Involved in the inhibition of apoptosis during cell proliferation and growth arrest in imaginal disks. Also functions in planar cell polarity. The protein is Discs overgrown protein kinase (dco) of Drosophila melanogaster (Fruit fly).